The sequence spans 75 residues: Kappa-scoloptoxin(03)-Ssm1d (75 aa).

The first 23 residues, 1-23, serve as a signal peptide directing secretion; sequence MKLSMAILLVMALIIFTLDKNYS.

The protein belongs to the scoloptoxin-03 family. Contains 3 disulfide bonds. As to expression, expressed by the venom gland.

It is found in the secreted. Functionally, inhibits voltage-gated potassium channels. This chain is Kappa-scoloptoxin(03)-Ssm1d, found in Scolopendra mutilans (Chinese red-headed centipede).